Consider the following 360-residue polypeptide: Alpha-2-macroglobulin receptor-associated protein (360 aa).

Residues 1–28 (MAPRRERVSTLPRLQLLVLLLLPLMLVP) form the signal peptide. S53 and S138 each carry phosphoserine. The stretch at 184 to 302 (EKIQEYNVLL…KHNHYQKQLE (119 aa)) forms a coiled coil. Positions 240–356 (RLRKVSHQGY…DLSSRVSRAR (117 aa)) are LDL receptor binding. N-linked (GlcNAc...) asparagine glycosylation is present at N271. The Prevents secretion from ER motif lies at 357–360 (HNEL).

Belongs to the alpha-2-MRAP family. In terms of assembly, interacts with the LRP1/alpha-2-macroglobulin receptor heavy and light chains; the interaction is transient and coincides with a reduction of ligand binding by the receptor. Interacts with LRP2/glycoprotein 330. Interacts with LRP1B; binding is followed by internalization and degradation. Interacts with LDLR. Interacts with SORL1. Interacts with LRP1; this interaction is followed by rapid internalization. N-glycosylated. As to expression, highly expressed in PYS-2 parietal endoderm cells and in the kidney. The RNA level increased about 10-fold during differentiation of F9 embryonal carcinoma cells to parietal endoderm cells.

It is found in the rough endoplasmic reticulum lumen. It localises to the endoplasmic reticulum-Golgi intermediate compartment lumen. The protein resides in the golgi apparatus. The protein localises to the cis-Golgi network. Its subcellular location is the golgi apparatus lumen. It is found in the endosome lumen. It localises to the cell surface. Its function is as follows. Molecular chaperone for LDL receptor-related proteins that may regulate their ligand binding activity along the secretory pathway. This chain is Alpha-2-macroglobulin receptor-associated protein (Lrpap1), found in Mus musculus (Mouse).